Consider the following 393-residue polypeptide: Sugar efflux transporter A (393 aa).

12 helical membrane-spanning segments follow: residues 22 to 42, 51 to 71, 82 to 102, 107 to 127, 152 to 172, 174 to 194, 219 to 239, 253 to 273, 287 to 307, 308 to 328, 344 to 364, and 366 to 386; these read VIAFLTGIAGALQLPTLSLFL, FMVGLFYTGSAVIGIVVSQIL, KTLILQCCLLGALACLLYAWN, VLLFIGVLLSSFGSTANPQLF, ISLSWVIGPPVAFALALGFGF, AMYLTAAVVFVLCGLLVWLLL, LLLFTACTLMWTCNGIYLINM, LAGVMMGTAAGLEIPVMLLAG, LAVIAGLIFYTGLTLLNGSWA, LLALQLLNAIFIGILAGMGML, LFTNTTRVGWIISGSLAGIVA, and VWSYHAGFVIAIAMLAGAAVC.

Belongs to the major facilitator superfamily. Set transporter family.

Its subcellular location is the cell inner membrane. In terms of biological role, involved in the efflux of sugars. The physiological role may be the reduction of the intracellular concentration of toxic sugars or sugar metabolites. Transports IPTG, lactose and arabinose. The sequence is that of Sugar efflux transporter A (sotA) from Dickeya chrysanthemi (Pectobacterium chrysanthemi).